We begin with the raw amino-acid sequence, 309 residues long: tRNA pseudouridine synthase B (309 aa).

Aspartate 51 (nucleophile) is an active-site residue.

This sequence belongs to the pseudouridine synthase TruB family. Type 1 subfamily.

It carries out the reaction uridine(55) in tRNA = pseudouridine(55) in tRNA. Its function is as follows. Responsible for synthesis of pseudouridine from uracil-55 in the psi GC loop of transfer RNAs. This chain is tRNA pseudouridine synthase B, found in Coxiella burnetii (strain Dugway 5J108-111).